The chain runs to 486 residues: Flavin-dependent monooxygenase pboD (486 aa).

Residues aspartate 51, glycine 65, and arginine 124 each coordinate FAD. Residue arginine 203 is part of the active site. 2 residues coordinate FAD: aspartate 344 and glycine 357.

Belongs to the paxM FAD-dependent monooxygenase family. Requires FAD as cofactor.

Its pathway is secondary metabolite biosynthesis. Flavin-dependent monooxygenase; part of the gene cluster that mediates the biosynthesis of protubonine B, a hydroxylated and diacetylated cyclo-L-Trp-L-Leu derivative. Within the pathway, pboD catalyzes the hydroxylation at C-3 of the indole ring of cyclo-L-Trp-L-Leu and subsequent formation of the pyrrolidine ring, eading to the production of protubonine D. PboD is also able to accept other cyclodipeptides (CDPs) as substrates, including cyclo-L-Trp-L-Trp, cyclo-L-Trp-L-Tyr, cyclo-L-Trp-L-Phe, cyclo-L-Trp-L-Met, cyclo-L-Trp-L-Ala, cyclo-L-Trp-L-Pro and cyclo-L-Trp-Gly. Assays with cyclo-L-Trp-L-Trp, cyclo-L-Trp-L-Tyr, cyclo-L-Trp-L-Phe show similar or even slightly higher conversion yields, compared with that of the natural substrate cyclo-L-Trp-L-Leu, whereas cyclo-L-Trp-L-Pro and cyclo-L-Trp-Gly are accepted by PboD but only with conversion yields of 10 and 4%, respectively. Cyclo-L-Trp-L-His is not accepted as a substrate. The first step of the protubonine B synthesis is performed by the nonribosomal peptide synthetase pboA that catalyzes the formation of cyclo-L-Trp-L-Leu by condensing L-Leu with L-Trp. The flavin-dependent monooxygenase pboD is responsible for hydroxylation at C-3 of the indole ring and subsequent formation of the pyrrolidine ring, leadind to protubonine D. Protubonine D is further diacetylated by two acetyltransferases, pboB and pboC, to form the final product protubonine B via protubonine C. This is Flavin-dependent monooxygenase pboD from Aspergillus ustus.